The sequence spans 283 residues: MLIIETTLILRREIKRLKQEGKRIALVPTMGNLHQGHLKLIEEARIHADVVIASIFVNPMQFDREADLANYPRTLQEDCELLRDKHVDIVFAPSAKEMYPNGMENQTIVEVPVLSSVLEGASRPGHFRGVTTVVSKLFNLVQPDVALFGEKDYQQLQIIKKMVSDLCFDISIIPVPIVRDKTGLAFSSRNRLLSDNEKQQAPVLYQAMQQIAEQLKSGNLDVNQLLQTAKATLEQQGFRADECFICDAQTLAPLSEESRCAVILMAAWLGNTRLIDSQQVSLV.

30–37 is a binding site for ATP; sequence MGNLHQGH. Histidine 37 acts as the Proton donor in catalysis. Glutamine 61 provides a ligand contact to (R)-pantoate. Residue glutamine 61 participates in beta-alanine binding. 149 to 152 contacts ATP; that stretch reads GEKD. (R)-pantoate is bound at residue glutamine 155. ATP contacts are provided by residues valine 178 and 186 to 189; that span reads FSSR.

This sequence belongs to the pantothenate synthetase family. As to quaternary structure, homodimer.

The protein resides in the cytoplasm. It carries out the reaction (R)-pantoate + beta-alanine + ATP = (R)-pantothenate + AMP + diphosphate + H(+). The protein operates within cofactor biosynthesis; (R)-pantothenate biosynthesis; (R)-pantothenate from (R)-pantoate and beta-alanine: step 1/1. In terms of biological role, catalyzes the condensation of pantoate with beta-alanine in an ATP-dependent reaction via a pantoyl-adenylate intermediate. The sequence is that of Pantothenate synthetase from Proteus mirabilis (strain HI4320).